The following is a 508-amino-acid chain: MGLPWYRVHTVVLNDPGRLIAVHLMHTALVSGWAGSMALYELAVFDPSDPVLDPMWRQGMFVIPFMTRLGITKSWGGWSITGETVTNAGIWSYEGVAAVHIVLSGLLFLAAIWHWVYWDLELFRDERTGKPSLDLPKIFGIHLFLSGVLCFAFGAFHVTGLFGPGIWISDPYGLTGKVQPVAPAWGAEGFDPFVPGGIASHHIAAGILGILAGLFHLSVRPPQRLYKGLRMGNVETVLSSSIAAVFFAAFVVAGTMWYGSAATPIELFGPTRYQWDQGFFQQEIDRRIRSSKAENLSLSEAWSKIPEKLAFYDYIGNNPAKGGLFRAGAMDNGDGIAVGWLGHAVFKDKEGNELFVRRMPTFFETFPVVLVDEQGIVRADVPFRRAESKYSVEQVGVTVEFYGGELDGVSFSDPATVKKYARRAQLGEIFEFDRATLKSDGVFRSSPRGWFTFGHATFALLFFFGHIWHGARTLFRDVFAGIDPDLDAQVEFGAFQKLGDPTTKRQVI.

6 consecutive transmembrane segments (helical) span residues 21 to 36, 101 to 115, 140 to 156, 203 to 218, 237 to 252, and 457 to 472; these read AVHL…WAGS, IVLS…IWHW, GIHL…FGAF, IAAG…FHLS, VLSS…AFVV, and TFAL…HGAR.

The protein belongs to the PsbB/PsbC family. PsbB subfamily. As to quaternary structure, PSII is composed of 1 copy each of membrane proteins PsbA, PsbB, PsbC, PsbD, PsbE, PsbF, PsbH, PsbI, PsbJ, PsbK, PsbL, PsbM, PsbT, PsbX, PsbY, PsbZ, Psb30/Ycf12, at least 3 peripheral proteins of the oxygen-evolving complex and a large number of cofactors. It forms dimeric complexes. It depends on Binds multiple chlorophylls. PSII binds additional chlorophylls, carotenoids and specific lipids. as a cofactor.

The protein localises to the plastid. It localises to the chloroplast thylakoid membrane. Its function is as follows. One of the components of the core complex of photosystem II (PSII). It binds chlorophyll and helps catalyze the primary light-induced photochemical processes of PSII. PSII is a light-driven water:plastoquinone oxidoreductase, using light energy to abstract electrons from H(2)O, generating O(2) and a proton gradient subsequently used for ATP formation. This Marchantia polymorpha (Common liverwort) protein is Photosystem II CP47 reaction center protein.